We begin with the raw amino-acid sequence, 1978 residues long: Centrosomal protein Cep290 (1978 aa).

The segment at 1-650 (MSMDIPETVS…SLCEVPEIAE (650 aa)) is necessary and sufficient for function in ciliogenesis, transition zone (TZ) assembly, and recruitment of DZP1 and Mks1 to the TZ. Also required for subcellular localization to the cilium basal body. 2 coiled-coil regions span residues 76 to 384 (DRRL…KSQQ) and 471 to 505 (IERLTLKLRTSEELRLQLKLEKSELRRKLLELQQD). The tract at residues 271–296 (QLEGKSISSGQTNSSNSQSQQEEEHA) is disordered. The span at 276 to 290 (SISSGQTNSSNSQSQ) shows a compositional bias: low complexity. Residues 663-688 (ATRPSSPTEATMGLRRPTVPDPEEKP) form a disordered region. Coiled coils occupy residues 853–887 (FEEQQQELLTWRSKQAELQRETKQLEGLLHVANEQ), 922–970 (LAKV…TQQD), and 1192–1233 (ADAV…SRSE). Basic and acidic residues predominate over residues 1313–1324 (KEKLRQKPEVPV). Residues 1313-1397 (KEKLRQKPEV…EKQDTEELKE (85 aa)) are disordered. The segment covering 1329 to 1341 (STDSRSSSSSDSS) has biased composition (low complexity). Acidic residues predominate over residues 1379 to 1391 (VTEEPEGEEEKQD). Coiled-coil stretches lie at residues 1405–1439 (IKDLKDKLEYSERSLKTREEEVDILKEKLKLCQER) and 1501–1654 (LNRT…LESK). Disordered regions lie at residues 1684-1714 (VGVSKFAPSPSESPETYTGPSSECSSPAHHH) and 1859-1884 (LKDGRRSTESRSSMDSTPAEAARLQQ). The segment covering 1693–1708 (PSESPETYTGPSSECS) has biased composition (polar residues). Residues 1726-1935 (IEALKSRIEL…KEQLVKKTQL (210 aa)) are a coiled coil.

In terms of assembly, interacts (via N-terminus) with DZIP1. Expressed in sensory neurons type I and in germ cells (at protein level).

The protein resides in the cytoplasm. Its subcellular location is the cytoskeleton. It localises to the cilium basal body. It is found in the microtubule organizing center. The protein localises to the centrosome. The protein resides in the centriole. In terms of biological role, essential for ciliogenesis in sensory neurons and spermatocytes. During neuron and spermatocyte ciliogenesis, essential for initiating transition zone (TZ) assembly and is required for the formation of diverse connections between microtubules and between microtubules and the membrane. Regulates TZ assembly by recruiting DZIP1 to the plasma membrane where it promotes early ciliary membrane formation resulting in the initiation of TZ assembly. This Drosophila melanogaster (Fruit fly) protein is Centrosomal protein Cep290.